A 1032-amino-acid polypeptide reads, in one-letter code: UPF0182 protein sll1060 (1032 aa).

A run of 9 helical transmembrane segments spans residues 27-49, 69-87, 144-166, 197-219, 226-248, 283-300, 321-339, 364-386, and 406-428; these read WVKG…RIYV, WQGS…FIVF, VLLP…YVFI, FSGM…IGVL, PGLV…FRLL, WWRG…LIIL, HISA…EHWL, LPVE…WLSV, and IIGL…LGGW.

This sequence belongs to the UPF0182 family.

It is found in the cell membrane. This Synechocystis sp. (strain ATCC 27184 / PCC 6803 / Kazusa) protein is UPF0182 protein sll1060.